A 264-amino-acid polypeptide reads, in one-letter code: Neurexophilin-2 (264 aa).

The N-terminal stretch at Met-1–Ser-22 is a signal peptide. The interval Glu-23–Val-90 is II. 4 N-linked (GlcNAc...) asparagine glycosylation sites follow: Asn-86, Asn-139, Asn-149, and Asn-155. The interval Gln-91–Phe-169 is III. The interval Glu-170 to Glu-178 is IV (linker domain). The segment at Thr-179 to Gly-264 is v (Cys-rich).

It belongs to the neurexophilin family. In terms of processing, may be proteolytically processed at the boundary between the N-terminal non-conserved and the central conserved domain in neuron-like cells. In terms of tissue distribution, brain, only in a scattered subpopulation of neurons that probably represent inhibitory interneurons.

Its subcellular location is the secreted. In terms of biological role, may be signaling molecules that resemble neuropeptides and that act by binding to alpha-neurexins and possibly other receptors. The sequence is that of Neurexophilin-2 (NXPH2) from Bos taurus (Bovine).